The following is a 331-amino-acid chain: Ribosomal RNA small subunit methyltransferase H (331 aa).

S-adenosyl-L-methionine contacts are provided by residues 49 to 51, aspartate 68, leucine 102, aspartate 116, and glutamine 123; that span reads GGH.

It belongs to the methyltransferase superfamily. RsmH family.

The protein localises to the cytoplasm. The catalysed reaction is cytidine(1402) in 16S rRNA + S-adenosyl-L-methionine = N(4)-methylcytidine(1402) in 16S rRNA + S-adenosyl-L-homocysteine + H(+). Specifically methylates the N4 position of cytidine in position 1402 (C1402) of 16S rRNA. This is Ribosomal RNA small subunit methyltransferase H from Renibacterium salmoninarum (strain ATCC 33209 / DSM 20767 / JCM 11484 / NBRC 15589 / NCIMB 2235).